Here is a 329-residue protein sequence, read N- to C-terminus: Clavesin-2 (329 aa).

The 162-residue stretch at 96–257 folds into the CRAL-TRIO domain; the sequence is IKQALKDGFP…ELGGMLPPYD (162 aa). Residues 293 to 329 form a disordered region; that stretch reads SPKTMKRSQSVVEPGVLKRPEKVKSEEENMQPLLSLD. The segment covering 308–319 has biased composition (basic and acidic residues); sequence VLKRPEKVKSEE.

It localises to the golgi apparatus. The protein localises to the trans-Golgi network membrane. It is found in the early endosome membrane. Its subcellular location is the cytoplasmic vesicle. The protein resides in the clathrin-coated vesicle. Functionally, required for normal morphology of late endosomes and/or lysosomes in neurons. Binds phosphatidylinositol 3,5-bisphosphate (PtdIns(3,5)P2). This Danio rerio (Zebrafish) protein is Clavesin-2 (clvs2).